The primary structure comprises 456 residues: Serine/threonine-protein kinase PBS1 (456 aa).

The segment at 1-57 is disordered; it reads MGCFSCFDSSDDEKLNPVDESNHGQKKQSQPTVSNNISGLPSGGEKLSSKTNGGSKR. The N-myristoyl glycine moiety is linked to residue G2. Residues C3 and C6 are each lipidated (S-palmitoyl cysteine). Over residues 12 to 23 the composition is skewed to basic and acidic residues; it reads DEKLNPVDESNH. A Phosphoserine modification is found at S21. The segment covering 27 to 39 has biased composition (polar residues); that stretch reads KQSQPTVSNNISG. A Protein kinase domain is found at 86–363; the sequence is FHPDTFLGEG…ADVVTALSYL (278 aa). Residues 92–100 and K115 each bind ATP; that span reads LGEGGFGRV. Y160 carries the phosphotyrosine modification. The active-site Proton acceptor is the D213. A phosphoserine mark is found at S217 and S247. Phosphothreonine is present on residues T248 and T253. Phosphotyrosine is present on Y261. The Recognition motif required for RPS5-mediated plant resistance to P.syringae motif lies at 292–296; the sequence is SEMPH. The tract at residues 368-456 is disordered; sequence YDPSKDDSRR…QGTSESNSTG (89 aa). Composition is skewed to basic and acidic residues over residues 370-392 and 400-429; these read PSKD…RNDD and FDLE…RAVA. Positions 446–456 are enriched in polar residues; sequence EQGTSESNSTG.

The protein belongs to the protein kinase superfamily. Ser/Thr protein kinase family. In infected plant cells, it interacts with the P.syringae virulence protein avrPphB. In uninfected plants, autophosphorylated form interacts with RPS5. Interacts with FLS2. Post-translationally, cleaved by avrPphB in infected plant cells. Its cleavage serves as a signal that triggers the RPS5-mediated defense system. Autophosphorylates. Autophosphorylation may be required to trigger the RPS5-mediated plant defense system. In terms of processing, palmitoylation at Cys-3 and Cys-6 are required for plasma membrane location that is essential for the RPS5-mediated plant defense response.

It is found in the cell membrane. The enzyme catalyses L-seryl-[protein] + ATP = O-phospho-L-seryl-[protein] + ADP + H(+). The catalysed reaction is L-threonyl-[protein] + ATP = O-phospho-L-threonyl-[protein] + ADP + H(+). Protein kinase required for plant defense mechanism mediated by the disease resistance (R) protein RPS5. In case of infection by Pseudomonas syringae, AvrPphB triggers RPS5-mediated defense mechanism via the cleavage of PBS1. Both kinase activity and cleavage by avrPphB are independently required to trigger the RPS5-mediated resistance. Contributes to PAMP-triggered immunity (PTI) signaling and defense responses downstream of FLS2. This is Serine/threonine-protein kinase PBS1 from Arabidopsis thaliana (Mouse-ear cress).